A 605-amino-acid chain; its full sequence is Putative zinc finger CCCH domain-containing protein 57 (605 aa).

Disordered stretches follow at residues 198–218 (RHTGHESQNDADDAEQHGREV), 238–261 (LLQDDARRRRADAEAEQQGGDGEV), and 375–403 (QASHQDLPLQPPQGFPFQQQPQHDGYQQP). Basic and acidic residues-rich tracts occupy residues 201–218 (GHESQNDADDAEQHGREV) and 238–250 (LLQDDARRRRADA). A compositionally biased stretch (low complexity) spans 389-403 (FPFQQQPQHDGYQQP). C3H1-type zinc fingers lie at residues 519-547 (EPKTVMCPDWCRTGHCSSGDGCEYAHSQD) and 557-585 (KYRTEPCRYWLAGKGCWYGDKCRYKQHRL).

This Oryza sativa subsp. japonica (Rice) protein is Putative zinc finger CCCH domain-containing protein 57.